The chain runs to 168 residues: Profilin-3 (168 aa).

The tract at residues 14–36 (LSLEHSDKPQRRSRAKVKKKKKT) is disordered. Residues 24–36 (RRSRAKVKKKKKT) show a composition bias toward basic residues.

It belongs to the profilin family. In terms of assembly, occurs in many kinds of cells as a complex with monomeric actin in a 1:1 ratio. Binding to the poly-proline motif of formins induces formation of oligomers through the N-terminal hydrophobic residues of PRF3. In terms of tissue distribution, expressed in roots, rosette leaves, cauline leaves, stems and flowers.

The protein localises to the cytoplasm. It is found in the cytoskeleton. Its function is as follows. Binds to actin monomers and regulates the organization of the actin cytoskeleton. Can increase the critical concentration (Cc) of actin assembly in vitro. Acts as a downstream effector of the hydrogen sulfide signaling to regulate the assembly and depolymerization of F-actin. At high concentrations, profilin prevents the polymerization of actin, whereas it enhances it at low concentrations. Binding to the poly-proline motif of formin induces oligomerization of PRF3. PRF3 oligomers inhibit formin-mediated actin assembly to modulate plant immunity triggered by pathogen-associated molecular patterns (PAMPs). The polypeptide is Profilin-3 (Arabidopsis thaliana (Mouse-ear cress)).